Reading from the N-terminus, the 195-residue chain is 3-isopropylmalate dehydratase small subunit (195 aa).

The protein belongs to the LeuD family. LeuD type 1 subfamily. In terms of assembly, heterodimer of LeuC and LeuD.

It catalyses the reaction (2R,3S)-3-isopropylmalate = (2S)-2-isopropylmalate. Its pathway is amino-acid biosynthesis; L-leucine biosynthesis; L-leucine from 3-methyl-2-oxobutanoate: step 2/4. Its function is as follows. Catalyzes the isomerization between 2-isopropylmalate and 3-isopropylmalate, via the formation of 2-isopropylmaleate. This Salinispora arenicola (strain CNS-205) protein is 3-isopropylmalate dehydratase small subunit.